A 752-amino-acid polypeptide reads, in one-letter code: Sialidase 85-1.1 (752 aa).

An N-terminal signal peptide occupies residues 1-23 (MSRRVFASAVLLLIVVTMCCGGA). BNR repeat units lie at residues 274–285 (IYSKDNGSTWSL) and 319–330 (YVSRDMGTTWTE). The segment at 693-725 (APEPQVKIAPKPAAPAAPAGNEETARETGDGGA) is disordered. The span at 701 to 711 (APKPAAPAAPA) shows a compositional bias: low complexity.

The protein belongs to the glycosyl hydrolase 33 family.

It catalyses the reaction Hydrolysis of alpha-(2-&gt;3)-, alpha-(2-&gt;6)-, alpha-(2-&gt;8)- glycosidic linkages of terminal sialic acid residues in oligosaccharides, glycoproteins, glycolipids, colominic acid and synthetic substrates.. Functionally, developmentally regulated neuraminidase implicated in parasite invasion of cells. May contribute to the pathology during T.cruzi infection by cleaving sialic acid from cells of the immune system. This chain is Sialidase 85-1.1 (SA85-1.1), found in Trypanosoma cruzi.